Consider the following 360-residue polypeptide: D-alanine--D-alanine ligase (360 aa).

Residues 146–352 form the ATP-grasp domain; sequence KLCVADAGIA…FPELAERLLQ (207 aa). 179–234 provides a ligand contact to ATP; sequence EEKFIYPFFVKPANLGSSIGISKVHHREQLPAALKSACSLDSKIVVEKAITGREIE. Mg(2+) is bound by residues Asp305, Glu319, and Asn321.

This sequence belongs to the D-alanine--D-alanine ligase family. The cofactor is Mg(2+). Mn(2+) is required as a cofactor.

It localises to the cytoplasm. The enzyme catalyses 2 D-alanine + ATP = D-alanyl-D-alanine + ADP + phosphate + H(+). Its pathway is cell wall biogenesis; peptidoglycan biosynthesis. In terms of biological role, cell wall formation. This Pelodictyon phaeoclathratiforme (strain DSM 5477 / BU-1) protein is D-alanine--D-alanine ligase.